The primary structure comprises 569 residues: Proline--tRNA ligase (569 aa).

It belongs to the class-II aminoacyl-tRNA synthetase family. ProS type 1 subfamily. As to quaternary structure, homodimer.

It is found in the cytoplasm. The enzyme catalyses tRNA(Pro) + L-proline + ATP = L-prolyl-tRNA(Pro) + AMP + diphosphate. In terms of biological role, catalyzes the attachment of proline to tRNA(Pro) in a two-step reaction: proline is first activated by ATP to form Pro-AMP and then transferred to the acceptor end of tRNA(Pro). As ProRS can inadvertently accommodate and process non-cognate amino acids such as alanine and cysteine, to avoid such errors it has two additional distinct editing activities against alanine. One activity is designated as 'pretransfer' editing and involves the tRNA(Pro)-independent hydrolysis of activated Ala-AMP. The other activity is designated 'posttransfer' editing and involves deacylation of mischarged Ala-tRNA(Pro). The misacylated Cys-tRNA(Pro) is not edited by ProRS. The chain is Proline--tRNA ligase from Campylobacter jejuni subsp. jejuni serotype O:2 (strain ATCC 700819 / NCTC 11168).